A 29-amino-acid chain; its full sequence is Dermaseptin-9TR (29 aa).

In terms of tissue distribution, expressed by the skin glands.

The protein localises to the secreted. In terms of biological role, has antimicrobial activity. This is Dermaseptin-9TR from Phyllomedusa trinitatis (Trinidad leaf frog).